We begin with the raw amino-acid sequence, 93 residues long: YcgL domain-containing protein Spea_2443 (93 aa).

A YcgL domain is found at 1 to 85 (MICAVYKSLR…PVVNLLEQHK (85 aa)).

In Shewanella pealeana (strain ATCC 700345 / ANG-SQ1), this protein is YcgL domain-containing protein Spea_2443.